Reading from the N-terminus, the 109-residue chain is Parvalbumin alpha (109 aa).

2 consecutive EF-hand domains span residues 38–73 (KTDA…FSAH) and 77–109 (LNDT…VAQA). The Ca(2+) site is built by Asp51, Asp53, Ser55, Glu62, Asp90, Asp92, Asp94, Lys96, and Glu101.

It belongs to the parvalbumin family.

In muscle, parvalbumin is thought to be involved in relaxation after contraction. It binds two calcium ions. The chain is Parvalbumin alpha from Triakis semifasciata (Leopard shark).